The chain runs to 133 residues: Small ribosomal subunit protein uS8 (133 aa).

Belongs to the universal ribosomal protein uS8 family. As to quaternary structure, part of the 30S ribosomal subunit. Contacts proteins S5 and S12.

In terms of biological role, one of the primary rRNA binding proteins, it binds directly to 16S rRNA central domain where it helps coordinate assembly of the platform of the 30S subunit. The protein is Small ribosomal subunit protein uS8 of Chloroflexus aurantiacus (strain ATCC 29364 / DSM 637 / Y-400-fl).